The following is a 77-amino-acid chain: Large ribosomal subunit protein bL28 (77 aa).

Positions 1 to 20 (MSRVCQVTGKGPVTGNNISH) are disordered.

It belongs to the bacterial ribosomal protein bL28 family.

This is Large ribosomal subunit protein bL28 from Pseudomonas fluorescens (strain SBW25).